The chain runs to 695 residues: Electrogenic aspartate/glutamate antiporter Aralar, mitochondrial (695 aa).

Positions 1 to 310 (MPMHIPFPFN…DYSDLSNIAP (310 aa)) are N-terminal domain. Topologically, residues 2–345 (PMHIPFPFNW…FIQVLESSYR (344 aa)) are mitochondrial intermembrane. EF-hand domains lie at 71-104 (FNDE…GLLC), 105-140 (TPDA…TELH), 142-175 (KIPF…LLHD), and 176-211 (FHEE…VKRH). Ca(2+) is bound by residues Asp84, Ser86, Asp88, Leu90, Glu95, Asp118, Asn122, Thr124, and Asp129. The Ca(2+) site is built by Asp189, Thr193, and Asp200. The linker loop domain stretch occupies residues 311-327 (EHYTKHMTHRLAEIKAV). A carrier domain region spans residues 336 to 627 (FIQVLESSYR…RLFYVDFGGT (292 aa)). 3 Solcar repeats span residues 340–431 (LESS…VRDK), 439–523 (IPTW…TKAM), and 531–619 (NHPL…LQRL). Residues 346-363 (FTLGSFAGAVGATVVYPI) form a helical membrane-spanning segment. The Mitochondrial matrix portion of the chain corresponds to 364–405 (DLVKTRMQNQRAGSYIGEVAYRNSWDCFKKVVRHEGFMGLYR). A helical transmembrane segment spans residues 406–425 (GLLPQLMGVAPEKAIKLTVN). The Mitochondrial intermembrane portion of the chain corresponds to 426–448 (DLVRDKLTDKKGNIPTWAEVLAG). Residues 449-462 (GCAGASQVVFTNPL) form a helical membrane-spanning segment. The Mitochondrial matrix segment spans residues 463–497 (EIVKIRLQVAGEIASGSKIRAWSVVRELGLFGLYK). Residues 498 to 517 (GARACLLRDVPFSAIYFPTY) traverse the membrane as a helical segment. Topologically, residues 518-536 (AHTKAMMADKDGYNHPLTL) are mitochondrial intermembrane. The chain crosses the membrane as a helical span at residues 537-554 (LAAGAIAGVPAASLVTPA). Over 555–593 (DVIKTRLQVVARSGQTTYTGVWDATKKIMAEEGPRAFWK) the chain is Mitochondrial matrix. The chain crosses the membrane as a helical span at residues 594–613 (GTAARVFRSSPQFGVTLVTY). Residues 614-695 (ELLQRLFYVD…AASPSTATGS (82 aa)) lie on the Mitochondrial intermembrane side of the membrane. Positions 628-695 (QPKGSEAHKI…AASPSTATGS (68 aa)) are C-terminal domain.

It belongs to the mitochondrial carrier (TC 2.A.29) family. In terms of assembly, homodimer (via N-terminus). Requires Ca(2+) as cofactor. In terms of tissue distribution, expressed throughout the body in both males and females, including in ovaries and testes. As to expression, specifically expressed in female ovaries. Expressed throughout the body in both males and females but absent from ovaries and testes.

The protein localises to the mitochondrion inner membrane. It carries out the reaction L-aspartate(in) + L-glutamate(out) + H(+)(out) = L-aspartate(out) + L-glutamate(in) + H(+)(in). It catalyses the reaction 3-sulfino-L-alanine(out) + L-glutamate(in) + H(+)(in) = 3-sulfino-L-alanine(in) + L-glutamate(out) + H(+)(out). The catalysed reaction is L-2-aminoadipate(in) + L-glutamate(out) + H(+)(out) = L-2-aminoadipate(out) + L-glutamate(in) + H(+)(in). The enzyme catalyses L-glutamine(in) + L-glutamate(out) + Na(+)(out) + H(+)(out) = L-glutamine(out) + L-glutamate(in) + Na(+)(in) + H(+)(in). Its activity is regulated as follows. Activated by Ca(2+). Inhibited by p-chloromercuribenzoate, pyrocarbonate, mersalyl, tannic acid and N-ethylmaleimide. Its function is as follows. Mitochondrial electrogenic aspartate/glutamate antiporter that favors efflux of aspartate and entry of glutamate and proton within the mitochondria as part of the malate-aspartate shuttle. Also mediates the exchange of L-cysteinesulfinate (3-sulfino-L-alanine) for L-glutamate. Necessary for gamma-aminobutyric acid (GABA) uptake in brain mitochondria in response to increased mitochondrial membrane polarization; does not possess detectable GABA transport activity but role may be indirect. Possesses transport activity towards L-aspartate, L-glutamate and L-cysteinesulfinate (3-sulfino-L-alanine). L-glutamine transport activity is undetectable. GABA transport activity is undetectable. In terms of biological role, possesses transport activity towards L-aspartate, L-glutamate and L-cysteinesulfinate (3-sulfino-L-alanine). Has a wider substrate specificity range that includes L-2-aminoadipate and L-glutamine. GABA transport activity is undetectable. This Drosophila melanogaster (Fruit fly) protein is Electrogenic aspartate/glutamate antiporter Aralar, mitochondrial.